The sequence spans 253 residues: Tetraspanin-11 (253 aa).

The next 4 membrane-spanning stretches (helical) occupy residues 19 to 39 (LLFI…AVGI), 63 to 83 (VLIF…GAII), 93 to 113 (YFCL…LAHV), and 220 to 240 (LLLM…GMVL).

It belongs to the tetraspanin (TM4SF) family.

It localises to the membrane. The sequence is that of Tetraspanin-11 (Tspan11) from Rattus norvegicus (Rat).